The primary structure comprises 75 residues: MDLVALKFIAIGLAVFGMLGAGLGIANIFSAMLNGIARNPESEGKMKSYVYIGAAMVEIMGLLAFVLAMLLIFAA.

2 consecutive transmembrane segments (helical) span residues 8–28 and 52–72; these read FIAIGLAVFGMLGAGLGIANI and IGAAMVEIMGLLAFVLAMLLI.

The protein belongs to the ATPase C chain family. F-type ATPases have 2 components, F(1) - the catalytic core - and F(0) - the membrane proton channel. F(1) has five subunits: alpha(3), beta(3), gamma(1), delta(1), epsilon(1). F(0) has three main subunits: a(1), b(2) and c(10-14). The alpha and beta chains form an alternating ring which encloses part of the gamma chain. F(1) is attached to F(0) by a central stalk formed by the gamma and epsilon chains, while a peripheral stalk is formed by the delta and b chains.

The protein resides in the cell membrane. In terms of biological role, f(1)F(0) ATP synthase produces ATP from ADP in the presence of a proton or sodium gradient. F-type ATPases consist of two structural domains, F(1) containing the extramembraneous catalytic core and F(0) containing the membrane proton channel, linked together by a central stalk and a peripheral stalk. During catalysis, ATP synthesis in the catalytic domain of F(1) is coupled via a rotary mechanism of the central stalk subunits to proton translocation. Key component of the F(0) channel; it plays a direct role in translocation across the membrane. A homomeric c-ring of between 10-14 subunits forms the central stalk rotor element with the F(1) delta and epsilon subunits. The protein is ATP synthase subunit c of Wolbachia pipientis wMel.